We begin with the raw amino-acid sequence, 741 residues long: Polyribonucleotide nucleotidyltransferase (741 aa).

Mg(2+) contacts are provided by Asp-489 and Asp-495. In terms of domain architecture, KH spans 556-615 (PKIDSIQIPVDKIKVVIGKGGETIDKIIAETGVTIDIDEEGLVQIFSSDQDAIDRAKTII). Residues 625–693 (GEVYTVPVVR…EKGRVDASIK (69 aa)) enclose the S1 motif domain. The disordered stretch occupies residues 695–741 (LLPKPEKNEDGENGEEHRHCCCSHHKPDHHNESVEAPKKSDESETKE). 2 stretches are compositionally biased toward basic and acidic residues: residues 698 to 713 (KPEK…EHRH) and 723 to 741 (HHNE…ETKE).

This sequence belongs to the polyribonucleotide nucleotidyltransferase family. Requires Mg(2+) as cofactor.

It localises to the cytoplasm. It carries out the reaction RNA(n+1) + phosphate = RNA(n) + a ribonucleoside 5'-diphosphate. Involved in mRNA degradation. Catalyzes the phosphorolysis of single-stranded polyribonucleotides processively in the 3'- to 5'-direction. This is Polyribonucleotide nucleotidyltransferase from Streptococcus thermophilus (strain CNRZ 1066).